Consider the following 1091-residue polypeptide: MAGPGSLCCASRGASALLATALLYAALGDVVRSEQQIPLSVVKLWASAFGGEIKSIAAKYSGSQLLQKKYKEYEKDVAIEEIDGLQLVKKLAKIMEEMFHKKSEAVRRLVEAAEEAHLKHEFDADLQYEYFNAVLINERDKDGNFLELGKEFILAPNDHFNNLPVNISLSDVQVPTNMYNKDPAIVNGVYWSESLNKVFVDNFDRDPSLIWQYFGSAKGFFRQYPGIKWEPDENGVIAFDCRNRKWYIQAATSPKDVVILVDVSGSMKGLRLTIAKQTVSSILDTLGDDDFFNIITYNEELHYVEPCLNGTLVQADRTNKEHFREHLDKLFAKGIGMLDIALNEAFNILSDFNHTGQGSICSQAIMLITDGAVDTYDTIFAKYNWPDRKVRIFTYLIGREAAFADNLKWMACANKGFFTQISTLADVQENVMEYLHVLSRPKVIDQEHDVVWTEAYIDSTLPQAQKLADDQGLVLMTTVAMPVFSKQNETRSKGILLGVVGTDVPVKELLKTIPKYKLGIHGYAFAITNNGYILTHPELRPLYEEGKKRRKPNYSSVDLSEVEWEDRDDVLRNAMVNRKTGKFSMEVKKTVDKGKRVLVMTNDYYYTDIKGTPFSLGVALSRGHGKYFFRGNVTIEEGLHDLEHPDVSLADEWSYCNTDLHPEHRHLSQLEAIKLYLKGKEPLLQCDKELIQEVLFDAVVSAPIEAYWTSLALNKSENSDKGVEVAFLGTRTGLSRINLFVGAEQLTNQDFLKAGDKENIFNADHFPLWYRRAAEQIAGSFVYSIPFSTGTVNKSNVVTASTSIQLLDERKSPVVAAVGIQMKLEFFQRKFWTASRQCASLDGKCSISCDDETVNCYLIDNNGFILVSEDYTQTGDFFGEVEGAVMNKLLTMGSFKRITLYDYQAMCRANKESSDSAHGLLDPYKAFLSAAKWIMTELVLFLVEFNLCSWWHSDMTAKAQKLKQTLEPCDTEYPAFVSERTIKETTGNIACEDCSKSFVIQQIPSSNLFMVVVDSSCLCESVAPITMAPIEIRYNESLKCERLKAQKIRRRPESCHGFHPEENARECGGASSLQAQAALLLLPLVSSLFSR.

The first 33 residues, M1–S33, serve as a signal peptide directing secretion. Residues E34–G1068 lie on the Extracellular side of the membrane. A glycan (N-linked (GlcNAc...) asparagine) is linked at N166. One can recognise a VWFA domain in the interval D256–L438. 3 residues coordinate a divalent metal cation: D262, S264, and S266. An MIDAS-like motif motif is present at residues D262–S266. A glycan (N-linked (GlcNAc...) asparagine) is linked at N309. C412 and C1055 are oxidised to a cystine. The Cache domain maps to W452–R549. N-linked (GlcNAc...) asparagine glycans are attached at residues N553 and N632. Position 924 is a phosphotyrosine (Y924). A helical membrane pass occupies residues G1069 to F1089. The Cytoplasmic portion of the chain corresponds to S1090–R1091.

Belongs to the calcium channel subunit alpha-2/delta family. As to quaternary structure, dimer formed of alpha-2-2 and delta-2 chains; disulfide-linked. Voltage-dependent calcium channels are multisubunit complexes, consisting of alpha-1 (CACNA1), alpha-2 (CACNA2D), beta (CACNB) and delta (CACNA2D) subunits in a 1:1:1:1 ratio. In terms of processing, N-glycosylated. May be proteolytically processed into subunits alpha-2-3 and delta-3 that are disulfide-linked. It is however unclear whether such cleavage really takes place in vivo and has a functional role. In terms of tissue distribution, brain-specific. Predominantly expressed in the caudate putamen, entorhinal complex, hippocampus and cortex.

It is found in the membrane. Functionally, the alpha-2/delta subunit of voltage-dependent calcium channels regulates calcium current density and activation/inactivation kinetics of the calcium channel. Acts as a regulatory subunit for P/Q-type calcium channel (CACNA1A), N-type (CACNA1B), L-type (CACNA1C OR CACNA1D) but not T-type (CACNA1G). This Mus musculus (Mouse) protein is Voltage-dependent calcium channel subunit alpha-2/delta-3 (Cacna2d3).